The chain runs to 192 residues: Adenylate kinase (192 aa).

12–17 lines the ATP pocket; sequence GSGKTT. The segment at 34 to 63 is NMP; sequence STGDLLRAEVASGSELGQTIKSYIDNGNLV. AMP is bound by residues Thr35, Arg40, 61 to 63, 88 to 91, and Gln95; these read NLV and GFPR. The interval 130–136 is LID; sequence GRARGAD. Arg131 serves as a coordination point for ATP. AMP contacts are provided by Arg133 and Arg145. Arg173 provides a ligand contact to ATP.

The protein belongs to the adenylate kinase family. As to quaternary structure, monomer.

The protein resides in the cytoplasm. It carries out the reaction AMP + ATP = 2 ADP. Its pathway is purine metabolism; AMP biosynthesis via salvage pathway; AMP from ADP: step 1/1. Functionally, catalyzes the reversible transfer of the terminal phosphate group between ATP and AMP. Plays an important role in cellular energy homeostasis and in adenine nucleotide metabolism. This chain is Adenylate kinase, found in Nautilia profundicola (strain ATCC BAA-1463 / DSM 18972 / AmH).